A 505-amino-acid chain; its full sequence is Peroxisome proliferator-activated receptor gamma (505 aa).

T84 carries O-linked (GlcNAc) threonine glycosylation. Residue S112 is modified to Phosphoserine; by MAPK. A DNA-binding region (nuclear receptor) is located at residues 136-210 (AIECRVCGDK…VGMSHNAIRF (75 aa)). NR C4-type zinc fingers lie at residues 139–159 (CRVCGDKASGFHYGVHACEGC) and 176–198 (CDLNCRIHKKSRNKCQYCRFQKC). Residues 205 to 280 (HNAIRFGRMP…DKSPFVIYDM (76 aa)) form an interaction with FAM120B region. The NR LBD domain occupies 238–503 (DLRALAKHLY…HPLLQEIYKD (266 aa)). K252 is covalently cross-linked (Glycyl lysine isopeptide (Lys-Gly) (interchain with G-Cter in ubiquitin)). The short motif at 495–503 (PLLQEIYKD) is the 9aaTAD element.

The protein belongs to the nuclear hormone receptor family. NR1 subfamily. Interacts with FOXO1 (acetylated form). Heterodimer with other nuclear receptors, such as RXRA. The heterodimer with the retinoic acid receptor RXRA is called adipocyte-specific transcription factor ARF6. Interacts with NCOA6 coactivator, leading to a strong increase in transcription of target genes. Interacts with coactivator PPARBP, leading to a mild increase in transcription of target genes. Interacts with NOCA7 in a ligand-inducible manner. Interacts with NCOA1 and NCOA2 LXXLL motifs. Interacts with ASXL1, ASXL2, DNTTIP2, FAM120B, MAP2K1/MEK1, NR0B2, PDPK1, PRDM16, PRMT2 and TGFB1I1. Interacts (when activated by agonist) with PPP5C. Interacts with HELZ2 and THRAP3; the interaction stimulates the transcriptional activity of PPARG. Interacts with PER2, the interaction is ligand dependent and blocks PPARG recruitment to target promoters. Interacts with NOCT. Interacts with ACTN4. Interacts (when in the liganded conformation) with GPS2. Interacts with CRY1 and CRY2 in a ligand-dependent manner. In the absence of hormonal ligand, interacts with TACC1. In macrophages, interacts with PAQR3 and STUB1; the interactions promote PPARG poylubiquitination and STUB1-mediated degradation. Post-translationally, phosphorylated by MAPK. The phosphorylation inhibits PPAR gamma activity. In terms of processing, O-GlcNAcylation at Thr-84 reduces transcriptional activity in adipocytes. Phosphorylated at basal conditions and dephosphorylated when treated with the ligand. May be dephosphorylated by PPP5C. The phosphorylated form may be inactive and dephosphorylation at induces adipogenic activity. Post-translationally, ubiquitinated by E3 ubiquitin-protein ligase complex containing FBXO9; leading to proteasomal degradation. Ubiquitinated at Lys-252 by TRIM55 leading to proteasomal degradation. Ubiquitinated by E3 ubiquitin-protein ligase STUB1/CHIP; leading to proteasomal degradation. As to expression, highest expression in adipose tissue.

The protein resides in the nucleus. The protein localises to the cytoplasm. Its activity is regulated as follows. PDPK1 activates its transcriptional activity independently of its kinase activity. Nuclear receptor that binds peroxisome proliferators such as hypolipidemic drugs and fatty acids. Once activated by a ligand, the nuclear receptor binds to DNA specific PPAR response elements (PPRE) and modulates the transcription of its target genes, such as acyl-CoA oxidase. It therefore controls the peroxisomal beta-oxidation pathway of fatty acids. Key regulator of adipocyte differentiation and glucose homeostasis. ARF6 acts as a key regulator of the tissue-specific adipocyte P2 (aP2) enhancer. Acts as a critical regulator of gut homeostasis by suppressing NF-kappa-B-mediated pro-inflammatory responses. Plays a role in the regulation of cardiovascular circadian rhythms by regulating the transcription of BMAL1 in the blood vessels. This is Peroxisome proliferator-activated receptor gamma (Pparg) from Rattus norvegicus (Rat).